Here is a 512-residue protein sequence, read N- to C-terminus: ATP synthase subunit alpha (512 aa).

Position 169-176 (169-176 (GDRQTGKT)) interacts with ATP.

This sequence belongs to the ATPase alpha/beta chains family. In terms of assembly, F-type ATPases have 2 components, CF(1) - the catalytic core - and CF(0) - the membrane proton channel. CF(1) has five subunits: alpha(3), beta(3), gamma(1), delta(1), epsilon(1). CF(0) has three main subunits: a(1), b(2) and c(9-12). The alpha and beta chains form an alternating ring which encloses part of the gamma chain. CF(1) is attached to CF(0) by a central stalk formed by the gamma and epsilon chains, while a peripheral stalk is formed by the delta and b chains.

The protein resides in the cell inner membrane. The catalysed reaction is ATP + H2O + 4 H(+)(in) = ADP + phosphate + 5 H(+)(out). Produces ATP from ADP in the presence of a proton gradient across the membrane. The alpha chain is a regulatory subunit. The polypeptide is ATP synthase subunit alpha (Orientia tsutsugamushi (strain Boryong) (Rickettsia tsutsugamushi)).